The chain runs to 399 residues: Rhodopsin, G0-coupled (399 aa).

The Extracellular segment spans residues 1 to 17 (MPFPLNRTDTALVISPS). Asn-6 is a glycosylation site (N-linked (GlcNAc...) asparagine). Residues 18 to 43 (EFRIIGIFISICCIIGVLGNLLIIIV) traverse the membrane as a helical segment. Topologically, residues 44–55 (FAKRRSVRRPIN) are cytoplasmic. A helical membrane pass occupies residues 56-81 (FFVLNLAVSDLIVALLGYPMTAASAF). The Extracellular portion of the chain corresponds to 82–95 (SNRWIFDNIGCKIY). A disulfide bridge links Cys-92 with Cys-169. Residues 96–115 (AFLCFNSGVISIMTHAALSF) form a helical membrane-spanning segment. Topologically, residues 116–134 (CRYIIICQYGYRKKITQTT) are cytoplasmic. A helical membrane pass occupies residues 135–158 (VLRTLFSIWSFAMFWTLSPLFGWS). Topologically, residues 159-182 (SYVIEVVPVSCSVNWYGHGLGDVS) are extracellular. A helical transmembrane segment spans residues 183 to 210 (YTISVIVAVYVFPLSIIVFSYGMILQEK). The Cytoplasmic portion of the chain corresponds to 211 to 240 (VCKDSRKNGIRAQQRYTPRFIQDIEQRVTF). A helical membrane pass occupies residues 241–263 (ISFLMMAAFMVAWTPYAIMSALA). At 264 to 271 (IGSFNVEN) the chain is on the extracellular side. Residues 272-295 (SFAALPTLFAKASCAYNPFIYAFT) form a helical membrane-spanning segment. Residue Lys-282 is modified to N6-(retinylidene)lysine. Residues 296–399 (NANFRDTVVE…NTFTADFSVI (104 aa)) lie on the Cytoplasmic side of the membrane.

This sequence belongs to the G-protein coupled receptor 1 family. Opsin subfamily. In terms of processing, phosphorylated on some or all of the serine and threonine residues present in the C-terminal region. Retina. Expressed in the hyperpolarizing cell layer of the photoreceptor cells with its photoreceptive region adjacent to the lens.

The protein resides in the membrane. Visual pigments are the light-absorbing molecules that mediate vision. They consist of an apoprotein, opsin, covalently linked to cis-retinal. This Mizuhopecten yessoensis (Japanese scallop) protein is Rhodopsin, G0-coupled (SCOP2).